The sequence spans 330 residues: Ketol-acid reductoisomerase (NADP(+)) (330 aa).

The KARI N-terminal Rossmann domain occupies 2–182 (IHVYYDKDAN…GCTKAGVIET (181 aa)). NADP(+)-binding positions include 25–28 (YGSQ), R48, S51, S53, and 83–86 (DEVQ). H108 is an active-site residue. G134 provides a ligand contact to NADP(+). The 146-residue stretch at 183-328 (TFKEETETDL…KKLRDMMPWI (146 aa)) folds into the KARI C-terminal knotted domain. Mg(2+) is bound by residues D191, E195, E227, and E231. S252 is a substrate binding site.

This sequence belongs to the ketol-acid reductoisomerase family. Requires Mg(2+) as cofactor.

The enzyme catalyses (2R)-2,3-dihydroxy-3-methylbutanoate + NADP(+) = (2S)-2-acetolactate + NADPH + H(+). The catalysed reaction is (2R,3R)-2,3-dihydroxy-3-methylpentanoate + NADP(+) = (S)-2-ethyl-2-hydroxy-3-oxobutanoate + NADPH + H(+). The protein operates within amino-acid biosynthesis; L-isoleucine biosynthesis; L-isoleucine from 2-oxobutanoate: step 2/4. It participates in amino-acid biosynthesis; L-valine biosynthesis; L-valine from pyruvate: step 2/4. In terms of biological role, involved in the biosynthesis of branched-chain amino acids (BCAA). Catalyzes an alkyl-migration followed by a ketol-acid reduction of (S)-2-acetolactate (S2AL) to yield (R)-2,3-dihydroxy-isovalerate. In the isomerase reaction, S2AL is rearranged via a Mg-dependent methyl migration to produce 3-hydroxy-3-methyl-2-ketobutyrate (HMKB). In the reductase reaction, this 2-ketoacid undergoes a metal-dependent reduction by NADPH to yield (R)-2,3-dihydroxy-isovalerate. The sequence is that of Ketol-acid reductoisomerase (NADP(+)) from Halothermothrix orenii (strain H 168 / OCM 544 / DSM 9562).